The chain runs to 815 residues: Phenylalanine--tRNA ligase beta subunit (815 aa).

In terms of domain architecture, tRNA-binding spans 39–153 (ASHAQGVVVG…NVPDLGQPVG (115 aa)). In terms of domain architecture, B5 spans 414–498 (KSAEPVKLRR…RLVGFDRFEA (85 aa)). Mg(2+) contacts are provided by D476, D482, E485, and E486. An FDX-ACB domain is found at 721–814 (PTVPAMELDL…LVKQFSAELR (94 aa)).

It belongs to the phenylalanyl-tRNA synthetase beta subunit family. Type 1 subfamily. Tetramer of two alpha and two beta subunits. The cofactor is Mg(2+).

The protein resides in the cytoplasm. The catalysed reaction is tRNA(Phe) + L-phenylalanine + ATP = L-phenylalanyl-tRNA(Phe) + AMP + diphosphate + H(+). The protein is Phenylalanine--tRNA ligase beta subunit of Prochlorococcus marinus (strain MIT 9313).